The chain runs to 523 residues: GMP synthase [glutamine-hydrolyzing] (523 aa).

Residues 8–205 (KILILDFGSQ…VVKICGCERN (198 aa)) enclose the Glutamine amidotransferase type-1 domain. Residue Cys-85 is the Nucleophile of the active site. Catalysis depends on residues His-179 and Glu-181. In terms of domain architecture, GMPS ATP-PPase spans 206 to 398 (WTPENIIEDA…LGLPAEMLNR (193 aa)). 233–239 (SGGVDSS) is a binding site for ATP.

Homodimer.

It carries out the reaction XMP + L-glutamine + ATP + H2O = GMP + L-glutamate + AMP + diphosphate + 2 H(+). The protein operates within purine metabolism; GMP biosynthesis; GMP from XMP (L-Gln route): step 1/1. Catalyzes the synthesis of GMP from XMP. This chain is GMP synthase [glutamine-hydrolyzing], found in Pasteurella multocida (strain Pm70).